The chain runs to 461 residues: Transcriptional activator RocR (461 aa).

At Asp-57 the chain carries 4-aspartylphosphate. The 230-residue stretch at 143–372 (ILGTSPAIQD…EHMIEGAMNF (230 aa)) folds into the Sigma-54 factor interaction domain. ATP-binding positions include 171–178 (GETGTGKE) and 233–242 (AHGGTLLLDE). Residues 434-453 (ISKAAQELGISRQSLQYRLK) constitute a DNA-binding region (H-T-H motif).

Its function is as follows. Positive regulator of arginine catabolism. Controls the transcription of the two operons rocABC and rocDEF and probably acts by binding to the corresponding upstream activating sequences. The chain is Transcriptional activator RocR (rocR) from Bacillus subtilis (strain 168).